Here is a 396-residue protein sequence, read N- to C-terminus: MWIPVVGLPRRLRLSALAGAGRFCILGSEAATRKHLPARNHCGLSDSSPQLWPEPDFRNPPRKASKASLDFKRYVTDRRLAETLAQIYLGKPSRPPHLLLECNPGPGILTQALLEAGAKVVALESDKTFIPHLESLGKNLDGKLRVIHCDFFKLDPRSGGVIKPPAMSSRGLFKNLGIEAVPWTADIPLKVVGMFPSRGEKRALWKLAYDLYSCTSIYKFGRIEVNMFIGEKEFQKLMADPGNPDLYHVLSVIWQLACEIKVLHMEPWSSFDIYTRKGPLENPKRRELLDQLQQKLYLIQMIPRQNLFTKNLTPMNYNIFFHLLKHCFGRRSATVIDHLRSLTPLDARDILMQIGKQEDEKVVNMHPQDFKTLFETIERSKDCAYKWLYDETLEDR.

The transit peptide at 1-19 (MWIPVVGLPRRLRLSALAG) directs the protein to the mitochondrion. The disordered stretch occupies residues 44 to 64 (LSDSSPQLWPEPDFRNPPRKA). S-adenosyl-L-methionine-binding residues include V75, E124, and D150. Positions 330 to 331 (RR) are DNA-binding.

Belongs to the class I-like SAM-binding methyltransferase superfamily. rRNA adenine N(6)-methyltransferase family. KsgA subfamily. In terms of assembly, homodimer. Component of the mitochondrial transcription initiation complex, composed at least of TFB2M, TFAM and POLRMT. In this complex TFAM recruits POLRMT to the promoter whereas TFB2M induces structural changes in POLRMT to enable promoter opening and trapping of the DNA non-template strand. Interacts with mitochondrial RNA polymerase POLRMT. Interacts with TFAM. As to expression, ubiquitously expressed.

Its subcellular location is the mitochondrion. It catalyses the reaction adenosine in rRNA + S-adenosyl-L-methionine = N(6)-methyladenosine in rRNA + S-adenosyl-L-homocysteine + H(+). S-adenosyl-L-methionine-dependent rRNA methyltransferase which may methylate two specific adjacent adenosines in the loop of a conserved hairpin near the 3'-end of 12S mitochondrial rRNA. Component of the mitochondrial transcription initiation complex, composed at least of TFB2M, TFAM and POLRMT that is required for basal transcription of mitochondrial DNA. In this complex, TFAM recruits POLRMT to a specific promoter whereas TFB2M induces structural changes in POLRMT to enable promoter opening and trapping of the DNA non-template strand. Stimulates transcription independently of the methyltransferase activity. The chain is Dimethyladenosine transferase 2, mitochondrial from Homo sapiens (Human).